Reading from the N-terminus, the 629-residue chain is tRNA uridine 5-carboxymethylaminomethyl modification enzyme MnmG (629 aa).

Gly13–Gly18 is an FAD binding site. Gly273–Phe287 is an NAD(+) binding site.

The protein belongs to the MnmG family. Homodimer. Heterotetramer of two MnmE and two MnmG subunits. Requires FAD as cofactor.

Its subcellular location is the cytoplasm. Its function is as follows. NAD-binding protein involved in the addition of a carboxymethylaminomethyl (cmnm) group at the wobble position (U34) of certain tRNAs, forming tRNA-cmnm(5)s(2)U34. The sequence is that of tRNA uridine 5-carboxymethylaminomethyl modification enzyme MnmG from Shewanella baltica (strain OS223).